The following is a 257-amino-acid chain: tRNA (guanine-N(1)-)-methyltransferase (257 aa).

S-adenosyl-L-methionine contacts are provided by residues G117 and 137–142 (LGDFVL).

Belongs to the RNA methyltransferase TrmD family. In terms of assembly, homodimer.

It is found in the cytoplasm. It catalyses the reaction guanosine(37) in tRNA + S-adenosyl-L-methionine = N(1)-methylguanosine(37) in tRNA + S-adenosyl-L-homocysteine + H(+). Functionally, specifically methylates guanosine-37 in various tRNAs. In Bordetella parapertussis (strain 12822 / ATCC BAA-587 / NCTC 13253), this protein is tRNA (guanine-N(1)-)-methyltransferase.